The following is a 262-amino-acid chain: Acyl-[acyl-carrier-protein]--UDP-N-acetylglucosamine O-acyltransferase (262 aa).

Belongs to the transferase hexapeptide repeat family. LpxA subfamily. Homotrimer.

The protein localises to the cytoplasm. It carries out the reaction a (3R)-hydroxyacyl-[ACP] + UDP-N-acetyl-alpha-D-glucosamine = a UDP-3-O-[(3R)-3-hydroxyacyl]-N-acetyl-alpha-D-glucosamine + holo-[ACP]. It participates in glycolipid biosynthesis; lipid IV(A) biosynthesis; lipid IV(A) from (3R)-3-hydroxytetradecanoyl-[acyl-carrier-protein] and UDP-N-acetyl-alpha-D-glucosamine: step 1/6. Functionally, involved in the biosynthesis of lipid A, a phosphorylated glycolipid that anchors the lipopolysaccharide to the outer membrane of the cell. The sequence is that of Acyl-[acyl-carrier-protein]--UDP-N-acetylglucosamine O-acyltransferase from Vibrio campbellii (strain ATCC BAA-1116).